A 172-amino-acid polypeptide reads, in one-letter code: Adenine phosphoribosyltransferase (172 aa).

This sequence belongs to the purine/pyrimidine phosphoribosyltransferase family. As to quaternary structure, homodimer.

The protein resides in the cytoplasm. The enzyme catalyses AMP + diphosphate = 5-phospho-alpha-D-ribose 1-diphosphate + adenine. It functions in the pathway purine metabolism; AMP biosynthesis via salvage pathway; AMP from adenine: step 1/1. Functionally, catalyzes a salvage reaction resulting in the formation of AMP, that is energically less costly than de novo synthesis. This chain is Adenine phosphoribosyltransferase, found in Clostridium beijerinckii (strain ATCC 51743 / NCIMB 8052) (Clostridium acetobutylicum).